The sequence spans 257 residues: Small ribosomal subunit protein uS4c (257 aa).

2 consecutive S4 RNA-binding domains span residues 110-170 (MRLD…QLVN) and 189-255 (KTLP…KNYL).

It belongs to the universal ribosomal protein uS4 family. Part of the 30S ribosomal subunit. Contacts protein S5. The interaction surface between S4 and S5 is involved in control of translational fidelity.

The protein resides in the plastid. Its subcellular location is the chloroplast. Functionally, one of the primary rRNA binding proteins, it binds directly to 16S rRNA where it nucleates assembly of the body of the 30S subunit. In terms of biological role, with S5 and S12 plays an important role in translational accuracy. In Chlamydomonas reinhardtii (Chlamydomonas smithii), this protein is Small ribosomal subunit protein uS4c (rps4).